The following is a 443-amino-acid chain: UDP-N-acetylmuramate--L-alanine ligase (443 aa).

ATP is bound at residue 110–116 (GAHGKTS).

Belongs to the MurCDEF family.

Its subcellular location is the cytoplasm. The catalysed reaction is UDP-N-acetyl-alpha-D-muramate + L-alanine + ATP = UDP-N-acetyl-alpha-D-muramoyl-L-alanine + ADP + phosphate + H(+). It participates in cell wall biogenesis; peptidoglycan biosynthesis. Cell wall formation. The protein is UDP-N-acetylmuramate--L-alanine ligase of Streptococcus agalactiae serotype Ia (strain ATCC 27591 / A909 / CDC SS700).